The chain runs to 102 residues: MRPKEVWRELLEIAKNYYDEDKIFYSKTKRGAYRIKSFTKDKIVIEKLRGKLDEVLGKKRFVENWDKLVHGVEWNIPPAIKSFLKLHPKIVENEDGNLIYKE.

This is an uncharacterized protein from Methanocaldococcus jannaschii (strain ATCC 43067 / DSM 2661 / JAL-1 / JCM 10045 / NBRC 100440) (Methanococcus jannaschii).